We begin with the raw amino-acid sequence, 216 residues long: Ribosomal RNA small subunit methyltransferase G (216 aa).

S-adenosyl-L-methionine contacts are provided by residues G83, M88, 134–135, and R149; that span reads VE.

It belongs to the methyltransferase superfamily. RNA methyltransferase RsmG family.

Its subcellular location is the cytoplasm. The catalysed reaction is guanosine(527) in 16S rRNA + S-adenosyl-L-methionine = N(7)-methylguanosine(527) in 16S rRNA + S-adenosyl-L-homocysteine. In terms of biological role, specifically methylates the N7 position of guanine in position 527 of 16S rRNA. This chain is Ribosomal RNA small subunit methyltransferase G, found in Pseudomonas putida (strain GB-1).